The sequence spans 428 residues: MTQVFQKVSAIRGMNDVLPGPSARWEKFEEIVRGWLRSYGYRNVRTPVLEHTRLFARGIGEVTDIVEKEMYTFTDALNGDSLTMRPEMTAGIVRASIEHNMLYDRPHRVYAIGPVFRHERPQRGRYRQFHQIDVEALGFAGPDVDAEMIVMLARLWKLLGLQDVRLELNSLGQPAERAAHRAALIEHLERHQDILDEDGRRRMYSNPLRVLDTKNPAMQEMADSAPRLFDFLGEESRSHFDGLCQRLADAGIEYRLNPRLVRGLDYYNLTVFEWVTDRLGAQGTVCGGGRYDGLVELLGGKPAPAVGFAIGMERLLDLWEQSVEIEQPAECEVYIVHQGEEGQRLAARVGEQLRDAGLDVIVHAGAAGFKAQFKRADASGARIAVILGGDEVASRTASIKHLRGPVGADAAQQQVPLAQLADVLKSKG.

This sequence belongs to the class-II aminoacyl-tRNA synthetase family. Homodimer.

The protein localises to the cytoplasm. It carries out the reaction tRNA(His) + L-histidine + ATP = L-histidyl-tRNA(His) + AMP + diphosphate + H(+). This is Histidine--tRNA ligase from Bordetella bronchiseptica (strain ATCC BAA-588 / NCTC 13252 / RB50) (Alcaligenes bronchisepticus).